A 197-amino-acid chain; its full sequence is Holliday junction branch migration complex subunit RuvA (197 aa).

The tract at residues methionine 1–valine 63 is domain I. The tract at residues asparagine 64–leucine 142 is domain II. The segment at leucine 142–proline 146 is flexible linker. Positions alanine 147 to lysine 197 are domain III.

The protein belongs to the RuvA family. As to quaternary structure, homotetramer. Forms an RuvA(8)-RuvB(12)-Holliday junction (HJ) complex. HJ DNA is sandwiched between 2 RuvA tetramers; dsDNA enters through RuvA and exits via RuvB. An RuvB hexamer assembles on each DNA strand where it exits the tetramer. Each RuvB hexamer is contacted by two RuvA subunits (via domain III) on 2 adjacent RuvB subunits; this complex drives branch migration. In the full resolvosome a probable DNA-RuvA(4)-RuvB(12)-RuvC(2) complex forms which resolves the HJ.

The protein resides in the cytoplasm. The RuvA-RuvB-RuvC complex processes Holliday junction (HJ) DNA during genetic recombination and DNA repair, while the RuvA-RuvB complex plays an important role in the rescue of blocked DNA replication forks via replication fork reversal (RFR). RuvA specifically binds to HJ cruciform DNA, conferring on it an open structure. The RuvB hexamer acts as an ATP-dependent pump, pulling dsDNA into and through the RuvAB complex. HJ branch migration allows RuvC to scan DNA until it finds its consensus sequence, where it cleaves and resolves the cruciform DNA. This is Holliday junction branch migration complex subunit RuvA from Lactococcus lactis subsp. lactis (strain IL1403) (Streptococcus lactis).